A 185-amino-acid polypeptide reads, in one-letter code: Ribosome-recycling factor (185 aa).

Belongs to the RRF family.

Its subcellular location is the cytoplasm. Responsible for the release of ribosomes from messenger RNA at the termination of protein biosynthesis. May increase the efficiency of translation by recycling ribosomes from one round of translation to another. The protein is Ribosome-recycling factor of Thermus thermophilus (strain ATCC BAA-163 / DSM 7039 / HB27).